The following is a 353-amino-acid chain: UDP-N-acetylglucosamine--N-acetylmuramyl-(pentapeptide) pyrophosphoryl-undecaprenol N-acetylglucosamine transferase (353 aa).

Residues 10–12 (TGG), asparagine 124, serine 183, and glutamine 283 contribute to the UDP-N-acetyl-alpha-D-glucosamine site.

The protein belongs to the glycosyltransferase 28 family. MurG subfamily.

Its subcellular location is the cell inner membrane. It catalyses the reaction di-trans,octa-cis-undecaprenyl diphospho-N-acetyl-alpha-D-muramoyl-L-alanyl-D-glutamyl-meso-2,6-diaminopimeloyl-D-alanyl-D-alanine + UDP-N-acetyl-alpha-D-glucosamine = di-trans,octa-cis-undecaprenyl diphospho-[N-acetyl-alpha-D-glucosaminyl-(1-&gt;4)]-N-acetyl-alpha-D-muramoyl-L-alanyl-D-glutamyl-meso-2,6-diaminopimeloyl-D-alanyl-D-alanine + UDP + H(+). It functions in the pathway cell wall biogenesis; peptidoglycan biosynthesis. Its function is as follows. Cell wall formation. Catalyzes the transfer of a GlcNAc subunit on undecaprenyl-pyrophosphoryl-MurNAc-pentapeptide (lipid intermediate I) to form undecaprenyl-pyrophosphoryl-MurNAc-(pentapeptide)GlcNAc (lipid intermediate II). This Helicobacter pylori (strain Shi470) protein is UDP-N-acetylglucosamine--N-acetylmuramyl-(pentapeptide) pyrophosphoryl-undecaprenol N-acetylglucosamine transferase.